We begin with the raw amino-acid sequence, 222 residues long: CASP-like protein 1E1 (222 aa).

Residues 1-59 (MEASRVKPGFNGVGMAAGSVNGSSRRPGPGLGYGYGYYMGSGAAAGGSGRAAQAPVDGC) are Cytoplasmic-facing. A helical membrane pass occupies residues 60–80 (SVALRVFVVASTLVSAVVMGV). Topologically, residues 81-110 (DRQTRTIQITITDALPPLEVPLTANWSYSS) are extracellular. An N-linked (GlcNAc...) asparagine glycan is attached at asparagine 105. The helical transmembrane segment at 111-131 (AFVYFVVANAMVCLFSAAALA) threads the bilayer. The Cytoplasmic segment spans residues 132–146 (ACRSRAAMVPVMVGD). Residues 147 to 167 (LLALALLYSAVGAAAEFGILG) traverse the membrane as a helical segment. Topologically, residues 168–189 (ERGNSHVRWAKVCNVYGRFCDR) are extracellular. A helical membrane pass occupies residues 190 to 210 (AMAAVIVSLIGAFANLVLLML). Residues 211–222 (NILTIHKSSSYY) are Cytoplasmic-facing.

Belongs to the Casparian strip membrane proteins (CASP) family. Homodimer and heterodimers.

It localises to the cell membrane. In Sorghum bicolor (Sorghum), this protein is CASP-like protein 1E1.